A 317-amino-acid chain; its full sequence is Neuroguidin-A (317 aa).

2 disordered regions span residues 125 to 170 and 280 to 317; these read ENDP…SKVK and SALTGGEGRAEDMVPSMKKSKKGPKKSKKKKGFSRRRH. Positions 146–157 are enriched in acidic residues; sequence DERESDSGEEGA. Residues 297-317 are compositionally biased toward basic residues; the sequence is KKSKKGPKKSKKKKGFSRRRH.

It belongs to the SAS10 family. As to quaternary structure, part of the small subunit (SSU) processome, composed of more than 70 proteins and the RNA chaperone small nucleolar RNA (snoRNA) U3.

The protein resides in the nucleus. It is found in the nucleolus. The protein localises to the chromosome. Its subcellular location is the centromere. It localises to the cytoplasm. The protein resides in the cell projection. It is found in the axon. The protein localises to the dendrite. Its subcellular location is the filopodium. Its function is as follows. Part of the small subunit (SSU) processome, first precursor of the small eukaryotic ribosomal subunit. During the assembly of the SSU processome in the nucleolus, many ribosome biogenesis factors, an RNA chaperone and ribosomal proteins associate with the nascent pre-rRNA and work in concert to generate RNA folding, modifications, rearrangements and cleavage as well as targeted degradation of pre-ribosomal RNA by the RNA exosome. Its dissociation from the complex determines the transition from state pre-A1 to state pre-A1*. May inhibit mRNA translation. The sequence is that of Neuroguidin-A (ngdn-a) from Xenopus laevis (African clawed frog).